A 535-amino-acid chain; its full sequence is CTP synthase (535 aa).

An amidoligase domain region spans residues 1 to 267 (MTKFIFVTGG…DDIVIQRLQL (267 aa)). A CTP-binding site is contributed by S13. S13 serves as a coordination point for UTP. 14–19 (SLGKGI) contacts ATP. Residue Y54 coordinates L-glutamine. D71 lines the ATP pocket. Mg(2+)-binding residues include D71 and E141. CTP-binding positions include 148–150 (DIE), 188–193 (KTKPTQ), and K224. UTP-binding positions include 188-193 (KTKPTQ) and K224. 240 to 242 (RDA) is a binding site for ATP. A Glutamine amidotransferase type-1 domain is found at 293-535 (TIGLVGKYVS…VEAALNYQQK (243 aa)). Position 355 (G355) interacts with L-glutamine. The active-site Nucleophile; for glutamine hydrolysis is C382. L-glutamine contacts are provided by residues 383–386 (LGMQ), E406, and R463. Residues H508 and E510 contribute to the active site.

This sequence belongs to the CTP synthase family. Homotetramer.

The enzyme catalyses UTP + L-glutamine + ATP + H2O = CTP + L-glutamate + ADP + phosphate + 2 H(+). It carries out the reaction L-glutamine + H2O = L-glutamate + NH4(+). The catalysed reaction is UTP + NH4(+) + ATP = CTP + ADP + phosphate + 2 H(+). Its pathway is pyrimidine metabolism; CTP biosynthesis via de novo pathway; CTP from UDP: step 2/2. Allosterically activated by GTP, when glutamine is the substrate; GTP has no effect on the reaction when ammonia is the substrate. The allosteric effector GTP functions by stabilizing the protein conformation that binds the tetrahedral intermediate(s) formed during glutamine hydrolysis. Inhibited by the product CTP, via allosteric rather than competitive inhibition. In terms of biological role, catalyzes the ATP-dependent amination of UTP to CTP with either L-glutamine or ammonia as the source of nitrogen. Regulates intracellular CTP levels through interactions with the four ribonucleotide triphosphates. The chain is CTP synthase from Staphylococcus epidermidis (strain ATCC 35984 / DSM 28319 / BCRC 17069 / CCUG 31568 / BM 3577 / RP62A).